Reading from the N-terminus, the 610-residue chain is uncharacterized protein (610 aa).

The segment covering M1–P28 has biased composition (polar residues). A disordered region spans residues M1–E36. The segment at C41–K82 adopts an RING-type zinc-finger fold. Disordered regions lie at residues Y390–A411 and T431–R515. Low complexity predominate over residues S432–V447. 2 stretches are compositionally biased toward acidic residues: residues V448–D470 and S478–Q487.

This is an uncharacterized protein from Caenorhabditis elegans.